Consider the following 342-residue polypeptide: MVQNIAILGASGYTGAELVRLIATHPAMRIVALSGDRKAGMAMSEVFPFLRHLDLPRLQKIEEIDFSSVDLAFCALPHATSQAVIAGLPRDLKVVDLSADFRLRDPAAYETWYGKPHAAPELQKEAVYGLTEFYRDEIRGARLVAGTGCNAATGQYAIRPLIEAGVIDLDDILIDLKAGVSGAGRSLKENLLHAELSEGTHAYSAGGRHRHLGEFDQEFSKIAGRPVQVRFTPHLTPMNRGILANVYVKGDPQAVHRALTERYLTETFLEVLPFGALPSTRDIRGSNYVHIGVIGDRVPGCAMVVAVLDNLCKGSSGQAIQNANLMLGLDEAAGLGLAPVFP.

C149 is an active-site residue.

This sequence belongs to the NAGSA dehydrogenase family. Type 1 subfamily.

It is found in the cytoplasm. The catalysed reaction is N-acetyl-L-glutamate 5-semialdehyde + phosphate + NADP(+) = N-acetyl-L-glutamyl 5-phosphate + NADPH + H(+). The protein operates within amino-acid biosynthesis; L-arginine biosynthesis; N(2)-acetyl-L-ornithine from L-glutamate: step 3/4. Its function is as follows. Catalyzes the NADPH-dependent reduction of N-acetyl-5-glutamyl phosphate to yield N-acetyl-L-glutamate 5-semialdehyde. This is N-acetyl-gamma-glutamyl-phosphate reductase from Cereibacter sphaeroides (strain ATCC 17023 / DSM 158 / JCM 6121 / CCUG 31486 / LMG 2827 / NBRC 12203 / NCIMB 8253 / ATH 2.4.1.) (Rhodobacter sphaeroides).